Here is a 68-residue protein sequence, read N- to C-terminus: Protein SlyX homolog (68 aa).

This sequence belongs to the SlyX family.

The protein is Protein SlyX homolog of Brucella suis (strain ATCC 23445 / NCTC 10510).